The chain runs to 399 residues: S-adenosylmethionine synthase (399 aa).

Histidine 17 provides a ligand contact to ATP. Position 19 (aspartate 19) interacts with Mg(2+). K(+) is bound at residue glutamate 45. Glutamate 58 and glutamine 101 together coordinate L-methionine. Residues 101–111 (QSADIAMGVDQ) form a flexible loop region. ATP contacts are provided by residues 177 to 179 (DGK), 244 to 245 (RF), aspartate 253, 259 to 260 (RK), alanine 276, and lysine 280. An L-methionine-binding site is contributed by aspartate 253. Residue lysine 284 participates in L-methionine binding.

It belongs to the AdoMet synthase family. As to quaternary structure, homotetramer; dimer of dimers. The cofactor is Mg(2+). K(+) is required as a cofactor.

It is found in the cytoplasm. It catalyses the reaction L-methionine + ATP + H2O = S-adenosyl-L-methionine + phosphate + diphosphate. It participates in amino-acid biosynthesis; S-adenosyl-L-methionine biosynthesis; S-adenosyl-L-methionine from L-methionine: step 1/1. Functionally, catalyzes the formation of S-adenosylmethionine (AdoMet) from methionine and ATP. The overall synthetic reaction is composed of two sequential steps, AdoMet formation and the subsequent tripolyphosphate hydrolysis which occurs prior to release of AdoMet from the enzyme. The chain is S-adenosylmethionine synthase from Bacillus thuringiensis subsp. konkukian (strain 97-27).